Reading from the N-terminus, the 105-residue chain is Heat shock protein HspQ (105 aa).

The disordered stretch occupies residues 75–105; the sequence is GEMQEEHPEQPSMDELARSIRQQLQAPRLRN.

It belongs to the HspQ family.

It localises to the cytoplasm. In terms of biological role, involved in the degradation of certain denaturated proteins, including DnaA, during heat shock stress. The chain is Heat shock protein HspQ from Cronobacter sakazakii (strain ATCC BAA-894) (Enterobacter sakazakii).